Consider the following 73-residue polypeptide: Disintegrin trigramin-gamma (73 aa).

Residues 1–73 form the Disintegrin domain; the sequence is EAGEDCDCGS…AGCPRNPLHA (73 aa). 6 cysteine pairs are disulfide-bonded: Cys-6–Cys-21, Cys-8–Cys-16, Cys-15–Cys-38, Cys-29–Cys-35, Cys-34–Cys-59, and Cys-47–Cys-66. Residues 51–53 carry the Cell attachment site motif; it reads RGD.

Belongs to the venom metalloproteinase (M12B) family. P-II subfamily. P-IIa sub-subfamily. Monomer (disintegrin). Expressed by the venom gland.

It is found in the secreted. In terms of biological role, inhibits fibrinogen interaction with platelets. Acts by binding to alpha-IIb/beta-3 (ITGA2B/ITGB3) on the platelet surface and inhibits aggregation induced by ADP, thrombin, platelet-activating factor and collagen. This Craspedocephalus gramineus (Bamboo pit viper) protein is Disintegrin trigramin-gamma.